A 628-amino-acid chain; its full sequence is Phosphomethylpyrimidine synthase (628 aa).

Substrate contacts are provided by residues N229, M258, Y287, H323, 343-345 (SRG), 384-387 (DGLR), and E423. Position 427 (H427) interacts with Zn(2+). Residue Y450 participates in substrate binding. H491 lines the Zn(2+) pocket. [4Fe-4S] cluster-binding residues include C571, C574, and C579.

The protein belongs to the ThiC family. As to quaternary structure, homodimer. It depends on [4Fe-4S] cluster as a cofactor.

It carries out the reaction 5-amino-1-(5-phospho-beta-D-ribosyl)imidazole + S-adenosyl-L-methionine = 4-amino-2-methyl-5-(phosphooxymethyl)pyrimidine + CO + 5'-deoxyadenosine + formate + L-methionine + 3 H(+). The protein operates within cofactor biosynthesis; thiamine diphosphate biosynthesis. In terms of biological role, catalyzes the synthesis of the hydroxymethylpyrimidine phosphate (HMP-P) moiety of thiamine from aminoimidazole ribotide (AIR) in a radical S-adenosyl-L-methionine (SAM)-dependent reaction. The chain is Phosphomethylpyrimidine synthase from Variovorax paradoxus (strain S110).